The sequence spans 291 residues: MRIILITGISGSGKSVALNVLEDAGYYCVDNLPAQFIPELTRYLDAQGYTHLGVATDIRSRESLDQLPDTVRALAAEHQVEVIFLTASTDALVQRYSETRRRHPLSARTDGAAGGGAFNDTALMEAIEMERSLLSPLAEAAHRIDTSNVRTNTLRSWIKELIRDDSQRLTLLFESFGFKHGVPSDADMVFDVRSLPNPYYDLALRPLTGRDTPVIDFLQGQPMVLAMAEDIRAYVEKWLPSFIADNRSYLTVAIGCTGGQHRSVYIAERLANYFRAHGNVLVRHRELAPAG.

8–15 is an ATP binding site; sequence GISGSGKS. Residue 57–60 coordinates GTP; the sequence is DIRS.

This sequence belongs to the RapZ-like family.

Functionally, displays ATPase and GTPase activities. The protein is Nucleotide-binding protein RALTA_A0325 of Cupriavidus taiwanensis (strain DSM 17343 / BCRC 17206 / CCUG 44338 / CIP 107171 / LMG 19424 / R1) (Ralstonia taiwanensis (strain LMG 19424)).